The sequence spans 103 residues: Ubiquitin-related modifier 1 (103 aa).

G103 is subject to 1-thioglycine. G103 participates in a covalent cross-link: Glycyl lysine isopeptide (Gly-Lys) (interchain with K-? in acceptor proteins).

This sequence belongs to the URM1 family. Post-translationally, C-terminal thiocarboxylation occurs in 2 steps, it is first acyl-adenylated (-COAMP) via the hesA/moeB/thiF part of UBA4, then thiocarboxylated (-COSH) via the rhodanese domain of UBA4.

The protein resides in the cytoplasm. Its pathway is tRNA modification; 5-methoxycarbonylmethyl-2-thiouridine-tRNA biosynthesis. Functionally, acts as a sulfur carrier required for 2-thiolation of mcm(5)S(2)U at tRNA wobble positions of cytosolic tRNA(Lys), tRNA(Glu) and tRNA(Gln). Serves as sulfur donor in tRNA 2-thiolation reaction by being thiocarboxylated (-COSH) at its C-terminus by the MOCS3 homolog UBA4. The sulfur is then transferred to tRNA to form 2-thiolation of mcm(5)S(2)U. Prior mcm(5) tRNA modification by the elongator complex is required for 2-thiolation. Also acts as a ubiquitin-like protein (UBL) that is covalently conjugated via an isopeptide bond to lysine residues of target proteins such as AHP1. The thiocarboxylated form serves as substrate for conjugation and oxidative stress specifically induces the formation of UBL-protein conjugates. This Vanderwaltozyma polyspora (strain ATCC 22028 / DSM 70294 / BCRC 21397 / CBS 2163 / NBRC 10782 / NRRL Y-8283 / UCD 57-17) (Kluyveromyces polysporus) protein is Ubiquitin-related modifier 1.